Here is a 327-residue protein sequence, read N- to C-terminus: ATPase ASNA1 homolog (327 aa).

26-33 (KGGVGKTT) serves as a coordination point for ATP. Residue Asp57 is part of the active site. ATP-binding residues include Glu238 and Asn265. 2 residues coordinate Zn(2+): Cys274 and Cys277.

This sequence belongs to the arsA ATPase family. As to quaternary structure, homodimer.

Its subcellular location is the cytoplasm. It localises to the endoplasmic reticulum. Its function is as follows. ATPase required for the post-translational delivery of tail-anchored (TA) proteins to the endoplasmic reticulum. Recognizes and selectively binds the transmembrane domain of TA proteins in the cytosol. This complex then targets to the endoplasmic reticulum by membrane-bound receptors, where the tail-anchored protein is released for insertion. This process is regulated by ATP binding and hydrolysis. ATP binding drives the homodimer towards the closed dimer state, facilitating recognition of newly synthesized TA membrane proteins. ATP hydrolysis is required for insertion. Subsequently, the homodimer reverts towards the open dimer state, lowering its affinity for the membrane-bound receptor, and returning it to the cytosol to initiate a new round of targeting. This chain is ATPase ASNA1 homolog, found in Entamoeba dispar (strain ATCC PRA-260 / SAW760).